The sequence spans 240 residues: Probable alpha-aspartyl dipeptidase (240 aa).

Residues Ser125, Asp140, and His162 each act as charge relay system in the active site.

The protein belongs to the peptidase S51 family.

It localises to the cytoplasm. It carries out the reaction Dipeptidase E catalyzes the hydrolysis of dipeptides Asp-|-Xaa. It does not act on peptides with N-terminal Glu, Asn or Gln, nor does it cleave isoaspartyl peptides.. In terms of biological role, hydrolyzes dipeptides containing N-terminal aspartate residues. This chain is Probable alpha-aspartyl dipeptidase, found in Drosophila melanogaster (Fruit fly).